Reading from the N-terminus, the 242-residue chain is ATP synthase subunit a (242 aa).

A run of 5 helical transmembrane segments spans residues 21 to 41 (LASV…AIVC), 83 to 103 (AVTL…FAIV), 118 to 137 (ATVT…YYGI), 175 to 195 (LYGN…LFFE), and 198 to 218 (AWGW…SIFV).

This sequence belongs to the ATPase A chain family. In terms of assembly, F-type ATPases have 2 components, CF(1) - the catalytic core - and CF(0) - the membrane proton channel. CF(1) has five subunits: alpha(3), beta(3), gamma(1), delta(1), epsilon(1). CF(0) has three main subunits: a(1), b(2) and c(9-12). The alpha and beta chains form an alternating ring which encloses part of the gamma chain. CF(1) is attached to CF(0) by a central stalk formed by the gamma and epsilon chains, while a peripheral stalk is formed by the delta and b chains.

The protein resides in the cell membrane. Its function is as follows. Key component of the proton channel; it plays a direct role in the translocation of protons across the membrane. The chain is ATP synthase subunit a from Staphylococcus epidermidis (strain ATCC 35984 / DSM 28319 / BCRC 17069 / CCUG 31568 / BM 3577 / RP62A).